Reading from the N-terminus, the 258-residue chain is Thiazole synthase (258 aa).

The active-site Schiff-base intermediate with DXP is Lys100. 1-deoxy-D-xylulose 5-phosphate is bound by residues Gly161, 187 to 188 (AG), and 209 to 210 (NT).

The protein belongs to the ThiG family. As to quaternary structure, homotetramer. Forms heterodimers with either ThiH or ThiS.

Its subcellular location is the cytoplasm. The enzyme catalyses [ThiS sulfur-carrier protein]-C-terminal-Gly-aminoethanethioate + 2-iminoacetate + 1-deoxy-D-xylulose 5-phosphate = [ThiS sulfur-carrier protein]-C-terminal Gly-Gly + 2-[(2R,5Z)-2-carboxy-4-methylthiazol-5(2H)-ylidene]ethyl phosphate + 2 H2O + H(+). The protein operates within cofactor biosynthesis; thiamine diphosphate biosynthesis. Catalyzes the rearrangement of 1-deoxy-D-xylulose 5-phosphate (DXP) to produce the thiazole phosphate moiety of thiamine. Sulfur is provided by the thiocarboxylate moiety of the carrier protein ThiS. In vitro, sulfur can be provided by H(2)S. This Campylobacter jejuni subsp. doylei (strain ATCC BAA-1458 / RM4099 / 269.97) protein is Thiazole synthase.